The following is a 281-amino-acid chain: Bifunctional protein FolD (281 aa).

NADP(+) contacts are provided by residues 164-166 (GRS), serine 189, and threonine 230.

The protein belongs to the tetrahydrofolate dehydrogenase/cyclohydrolase family. Homodimer.

The enzyme catalyses (6R)-5,10-methylene-5,6,7,8-tetrahydrofolate + NADP(+) = (6R)-5,10-methenyltetrahydrofolate + NADPH. It catalyses the reaction (6R)-5,10-methenyltetrahydrofolate + H2O = (6R)-10-formyltetrahydrofolate + H(+). It participates in one-carbon metabolism; tetrahydrofolate interconversion. Catalyzes the oxidation of 5,10-methylenetetrahydrofolate to 5,10-methenyltetrahydrofolate and then the hydrolysis of 5,10-methenyltetrahydrofolate to 10-formyltetrahydrofolate. The chain is Bifunctional protein FolD from Dictyoglomus turgidum (strain DSM 6724 / Z-1310).